The following is a 154-amino-acid chain: Myoglobin (154 aa).

The region spanning 2 to 148 is the Globin domain; it reads ELSDQEWKHV…FRNDMASKYK (147 aa). His-65 is a binding site for nitrite. An O2-binding site is contributed by His-65. His-94 serves as a coordination point for heme b.

The protein belongs to the globin family. Monomeric.

It is found in the cytoplasm. Its subcellular location is the sarcoplasm. It catalyses the reaction Fe(III)-heme b-[protein] + nitric oxide + H2O = Fe(II)-heme b-[protein] + nitrite + 2 H(+). The enzyme catalyses H2O2 + AH2 = A + 2 H2O. Functionally, monomeric heme protein which primary function is to store oxygen and facilitate its diffusion within muscle tissues. Reversibly binds oxygen through a pentacoordinated heme iron and enables its timely and efficient release as needed during periods of heightened demand. Depending on the oxidative conditions of tissues and cells, and in addition to its ability to bind oxygen, it also has a nitrite reductase activity whereby it regulates the production of bioactive nitric oxide. Under stress conditions, like hypoxia and anoxia, it also protects cells against reactive oxygen species thanks to its pseudoperoxidase activity. The chain is Myoglobin (MB) from Alligator mississippiensis (American alligator).